Reading from the N-terminus, the 476-residue chain is Sulfate adenylyltransferase subunit 1 (476 aa).

Positions 24-239 (KSMLRFLTCG…VLENVDIDQK (216 aa)) constitute a tr-type G domain. Residues 33–40 (GSVDDGKS) are G1. Residue 33-40 (GSVDDGKS) participates in GTP binding. The G2 stretch occupies residues 91–95 (GITID). The interval 112 to 115 (DTPG) is G3. GTP is bound by residues 112–116 (DTPGH) and 167–170 (NKMD). Residues 167-170 (NKMD) are G4. The interval 205-207 (SAL) is G5.

The protein belongs to the TRAFAC class translation factor GTPase superfamily. Classic translation factor GTPase family. CysN/NodQ subfamily. Heterodimer composed of CysD, the smaller subunit, and CysN.

It catalyses the reaction sulfate + ATP + H(+) = adenosine 5'-phosphosulfate + diphosphate. It participates in sulfur metabolism; hydrogen sulfide biosynthesis; sulfite from sulfate: step 1/3. Functionally, with CysD forms the ATP sulfurylase (ATPS) that catalyzes the adenylation of sulfate producing adenosine 5'-phosphosulfate (APS) and diphosphate, the first enzymatic step in sulfur assimilation pathway. APS synthesis involves the formation of a high-energy phosphoric-sulfuric acid anhydride bond driven by GTP hydrolysis by CysN coupled to ATP hydrolysis by CysD. The sequence is that of Sulfate adenylyltransferase subunit 1 from Vibrio atlanticus (strain LGP32) (Vibrio splendidus (strain Mel32)).